A 1485-amino-acid polypeptide reads, in one-letter code: Actin cytoskeleton-regulatory complex protein pan1 (1485 aa).

The tract at residues 1 to 161 (MYSSSNSFMG…PPPPKSAGSK (161 aa)) is disordered. The segment covering 21-49 (PFMQQPSYSQYPPGQPQSQQQTGFPSQPT) has biased composition (low complexity). Over residues 59 to 78 (VGSQLQPQQTGFPGQLQPQF) the composition is skewed to polar residues. Over residues 81–107 (FPGAAPQQQQQQQQLGGFQQSVQQPQF) the composition is skewed to low complexity. Composition is skewed to polar residues over residues 111–127 (PPQN…TTGL) and 134–144 (RTSSEVASSFN). An EH 1 domain is found at 174–262 (DQAKFEQLFK…EKIKNEVSSM (89 aa)). In terms of domain architecture, EF-hand 1 spans 206–241 (LPGSELSKIWILSDTTKSGQLFFPEFALAMYLCNLR). Disordered stretches follow at residues 268–309 (FGVP…QPTN) and 323–342 (FLPQ…GPSA). Over residues 296-305 (PPAPQQPQPQ) the composition is skewed to pro residues. Positions 323–338 (FLPQQTGFQPNQSSFL) are enriched in polar residues. Residues 465-554 (EKKIYDDLFR…PELIPPSTRN (90 aa)) enclose the EH 2 domain. The EF-hand 2 domain maps to 498-533 (LNRQDLERIWTLADPHNRGRLNMDEFAVAMHLIYRK). Disordered stretches follow at residues 620-649 (AGYR…EEEL), 799-871 (AAEL…HERR), and 895-1485 (RTAH…RVLG). A coiled-coil region spans residues 645–765 (SEEELSVEQL…LFRLKDAKAH (121 aa)). Composition is skewed to basic and acidic residues over residues 816 to 871 (AAAR…HERR) and 899 to 920 (VRKE…HEDP). The span at 921 to 941 (SIASRPSPAPSAGSVGSAPGA) shows a compositional bias: low complexity. Basic and acidic residues-rich tracts occupy residues 942–960 (THED…RIAE), 980–1016 (RQER…EQRG), 1062–1137 (AARE…EQEA), and 1144–1156 (AELE…ERQL). Positions 1054–1172 (EETAATEQAA…LEDESSSDEE (119 aa)) form a coiled coil. Residues 1161–1173 (EGLEDESSSDEEG) show a composition bias toward acidic residues. The segment covering 1177–1188 (ITPQDSTPTQSQ) has biased composition (polar residues). Composition is skewed to low complexity over residues 1189–1201 (VLPA…AAPE) and 1210–1226 (PEIT…SSFS). Composition is skewed to polar residues over residues 1238-1248 (ITSQAAENQVS) and 1255-1270 (QTTI…STNP). Residues 1290–1299 (LERKSRVRPE) are compositionally biased toward basic and acidic residues. The segment covering 1353-1363 (SKSSTPVQDNT) has biased composition (polar residues). The span at 1364-1379 (VASPVVPEASASLSAP) shows a compositional bias: low complexity. Pro residues-rich tracts occupy residues 1380-1394 (AAPP…PPAS) and 1406-1441 (TAPP…PPGA). Over residues 1442–1451 (AAPAAPAGAA) the composition is skewed to low complexity. The WH2 domain occupies 1452-1469 (DRSALLASIQMGKGLRKV). A compositionally biased stretch (polar residues) spans 1472 to 1485 (NDRSSSSSAGRVLG).

It belongs to the PAN1 family. As to quaternary structure, component of the PAN1 actin cytoskeleton-regulatory complex.

The protein resides in the cell membrane. The protein localises to the endosome membrane. Its subcellular location is the cytoplasm. It localises to the cytoskeleton. It is found in the actin patch. Functionally, component of the PAN1 actin cytoskeleton-regulatory complex required for the internalization of endosomes during actin-coupled endocytosis. The complex links the site of endocytosis to the cell membrane-associated actin cytoskeleton. Mediates uptake of external molecules and vacuolar degradation of plasma membrane proteins. Plays a role in the proper organization of the cell membrane-associated actin cytoskeleton and promotes its destabilization. This Aspergillus clavatus (strain ATCC 1007 / CBS 513.65 / DSM 816 / NCTC 3887 / NRRL 1 / QM 1276 / 107) protein is Actin cytoskeleton-regulatory complex protein pan1 (pan1).